A 184-amino-acid polypeptide reads, in one-letter code: Nucleoside triphosphate pyrophosphatase (184 aa).

Catalysis depends on Asp66, which acts as the Proton acceptor.

Belongs to the Maf family. A divalent metal cation serves as cofactor.

It is found in the cytoplasm. It carries out the reaction a ribonucleoside 5'-triphosphate + H2O = a ribonucleoside 5'-phosphate + diphosphate + H(+). It catalyses the reaction a 2'-deoxyribonucleoside 5'-triphosphate + H2O = a 2'-deoxyribonucleoside 5'-phosphate + diphosphate + H(+). Functionally, nucleoside triphosphate pyrophosphatase. May have a dual role in cell division arrest and in preventing the incorporation of modified nucleotides into cellular nucleic acids. In Prochlorococcus marinus (strain MIT 9313), this protein is Nucleoside triphosphate pyrophosphatase.